Consider the following 113-residue polypeptide: Small ribosomal subunit protein bS6 (113 aa).

It belongs to the bacterial ribosomal protein bS6 family.

In terms of biological role, binds together with bS18 to 16S ribosomal RNA. The protein is Small ribosomal subunit protein bS6 of Buchnera aphidicola subsp. Schizaphis graminum (strain Sg).